Reading from the N-terminus, the 116-residue chain is Biogenesis of lysosome-related organelles complex 1 subunit CNL1 (116 aa).

The stretch at 63–95 (DIVDVNIQSFKDILSKCEELENYFTMLDQIEMI) forms a coiled coil.

The protein belongs to the BLOC1S4 family. In terms of assembly, component of the biogenesis of lysosome-related organelles complex-1 (BLOC-1).

The protein localises to the cytoplasm. In terms of biological role, component of the biogenesis of lysosome-related organelles complex-1 (BLOC-1), a complex that is involved in endosomal cargo sorting. The chain is Biogenesis of lysosome-related organelles complex 1 subunit CNL1 (CLN1) from Vanderwaltozyma polyspora (strain ATCC 22028 / DSM 70294 / BCRC 21397 / CBS 2163 / NBRC 10782 / NRRL Y-8283 / UCD 57-17) (Kluyveromyces polysporus).